Here is a 294-residue protein sequence, read N- to C-terminus: Protoheme IX farnesyltransferase (294 aa).

9 helical membrane passes run leucine 8–alanine 28, tyrosine 35–leucine 55, isoleucine 81–leucine 101, valine 107–tryptophan 127, isoleucine 133–alanine 153, leucine 163–leucine 183, methionine 209–methionine 226, serine 230–tyrosine 252, and phenylalanine 266–leucine 286.

The protein belongs to the UbiA prenyltransferase family. Protoheme IX farnesyltransferase subfamily.

Its subcellular location is the cell inner membrane. It catalyses the reaction heme b + (2E,6E)-farnesyl diphosphate + H2O = Fe(II)-heme o + diphosphate. Its pathway is porphyrin-containing compound metabolism; heme O biosynthesis; heme O from protoheme: step 1/1. Converts heme B (protoheme IX) to heme O by substitution of the vinyl group on carbon 2 of heme B porphyrin ring with a hydroxyethyl farnesyl side group. This Blochmanniella pennsylvanica (strain BPEN) protein is Protoheme IX farnesyltransferase.